Here is a 322-residue protein sequence, read N- to C-terminus: Lipoyl synthase (322 aa).

[4Fe-4S] cluster is bound by residues C68, C73, C79, C94, C98, C101, and S309. In terms of domain architecture, Radical SAM core spans 80-298 (FNHGTASFMI…RVAGVEMGFS (219 aa)).

Belongs to the radical SAM superfamily. Lipoyl synthase family. The cofactor is [4Fe-4S] cluster.

It is found in the cytoplasm. The catalysed reaction is [[Fe-S] cluster scaffold protein carrying a second [4Fe-4S](2+) cluster] + N(6)-octanoyl-L-lysyl-[protein] + 2 oxidized [2Fe-2S]-[ferredoxin] + 2 S-adenosyl-L-methionine + 4 H(+) = [[Fe-S] cluster scaffold protein] + N(6)-[(R)-dihydrolipoyl]-L-lysyl-[protein] + 4 Fe(3+) + 2 hydrogen sulfide + 2 5'-deoxyadenosine + 2 L-methionine + 2 reduced [2Fe-2S]-[ferredoxin]. It functions in the pathway protein modification; protein lipoylation via endogenous pathway; protein N(6)-(lipoyl)lysine from octanoyl-[acyl-carrier-protein]: step 2/2. Functionally, catalyzes the radical-mediated insertion of two sulfur atoms into the C-6 and C-8 positions of the octanoyl moiety bound to the lipoyl domains of lipoate-dependent enzymes, thereby converting the octanoylated domains into lipoylated derivatives. This Idiomarina loihiensis (strain ATCC BAA-735 / DSM 15497 / L2-TR) protein is Lipoyl synthase.